Consider the following 342-residue polypeptide: Cyclin pch1 (342 aa).

The segment at 261 to 342 (LPIDQKNGSH…TDKEMETEAS (82 aa)) is disordered. Positions 278–314 (TPSSLASVSTQATPQHQNSSGRTDSFHSLNTETPSKS) are enriched in polar residues. Position 300 is a phosphothreonine (threonine 300). A Phosphoserine modification is found at serine 302. Over residues 329-342 (KSSDTDKEMETEAS) the composition is skewed to basic and acidic residues.

It belongs to the cyclin family. Cyclin C subfamily. As to quaternary structure, interacts with cdc2 protein kinase and with the N-terminal domain of cdk9.

The protein resides in the nucleus. Essential for progression through the whole cell cycle. The protein is Cyclin pch1 (pch1) of Schizosaccharomyces pombe (strain 972 / ATCC 24843) (Fission yeast).